We begin with the raw amino-acid sequence, 339 residues long: Bifunctional protein GlmU (339 aa).

The tract at residues 1-234 (MKKENPLAIV…PKDVLGVNSR (234 aa)) is pyrophosphorylase. Residues 12–15 (LAAG), Lys26, Gln77, and 82–83 (GT) contribute to the UDP-N-acetyl-alpha-D-glucosamine site. A Mg(2+)-binding site is contributed by Asp107. The UDP-N-acetyl-alpha-D-glucosamine site is built by Gly144, Glu159, Asn174, and Asn232. Mg(2+) is bound at residue Asn232. The tract at residues 235–255 (IELAMADEELRMRRNREVMLT) is linker. The segment at 256-339 (GVSMILPATI…KIPAQQREEE (84 aa)) is N-acetyltransferase.

This sequence belongs to the N-acetylglucosamine-1-phosphate uridyltransferase family. As to quaternary structure, homotrimer. It depends on Mg(2+) as a cofactor.

The protein resides in the cytoplasm. It carries out the reaction alpha-D-glucosamine 1-phosphate + acetyl-CoA = N-acetyl-alpha-D-glucosamine 1-phosphate + CoA + H(+). It catalyses the reaction N-acetyl-alpha-D-glucosamine 1-phosphate + UTP + H(+) = UDP-N-acetyl-alpha-D-glucosamine + diphosphate. It participates in nucleotide-sugar biosynthesis; UDP-N-acetyl-alpha-D-glucosamine biosynthesis; N-acetyl-alpha-D-glucosamine 1-phosphate from alpha-D-glucosamine 6-phosphate (route II): step 2/2. Its pathway is nucleotide-sugar biosynthesis; UDP-N-acetyl-alpha-D-glucosamine biosynthesis; UDP-N-acetyl-alpha-D-glucosamine from N-acetyl-alpha-D-glucosamine 1-phosphate: step 1/1. It functions in the pathway bacterial outer membrane biogenesis; LPS lipid A biosynthesis. Catalyzes the last two sequential reactions in the de novo biosynthetic pathway for UDP-N-acetylglucosamine (UDP-GlcNAc). The C-terminal domain catalyzes the transfer of acetyl group from acetyl coenzyme A to glucosamine-1-phosphate (GlcN-1-P) to produce N-acetylglucosamine-1-phosphate (GlcNAc-1-P), which is converted into UDP-GlcNAc by the transfer of uridine 5-monophosphate (from uridine 5-triphosphate), a reaction catalyzed by the N-terminal domain. This is Bifunctional protein GlmU (glmU) from Desulfotalea psychrophila (strain LSv54 / DSM 12343).